Here is a 227-residue protein sequence, read N- to C-terminus: Cytochrome c oxidase subunit 2 (227 aa).

Over 1-14 the chain is Mitochondrial intermembrane; sequence MAYPLQLGFQDASS. The chain crosses the membrane as a helical span at residues 15 to 45; it reads PIMEELLHFHDHTLMIVFLISSLVLYIISLM. Residues 46–59 are Mitochondrial matrix-facing; it reads LTTKLTHTSTMDAQ. The chain crosses the membrane as a helical span at residues 60 to 87; the sequence is EVETIWTILPAIILILIALPSLRILYMM. The Mitochondrial intermembrane portion of the chain corresponds to 88 to 227; sequence DEINNPSLTV…HFENWTTTML (140 aa). The Cu cation site is built by H161, C196, E198, C200, H204, and M207. E198 contributes to the Mg(2+) binding site.

It belongs to the cytochrome c oxidase subunit 2 family. Component of the cytochrome c oxidase (complex IV, CIV), a multisubunit enzyme composed of 14 subunits. The complex is composed of a catalytic core of 3 subunits MT-CO1, MT-CO2 and MT-CO3, encoded in the mitochondrial DNA, and 11 supernumerary subunits COX4I, COX5A, COX5B, COX6A, COX6B, COX6C, COX7A, COX7B, COX7C, COX8 and NDUFA4, which are encoded in the nuclear genome. The complex exists as a monomer or a dimer and forms supercomplexes (SCs) in the inner mitochondrial membrane with NADH-ubiquinone oxidoreductase (complex I, CI) and ubiquinol-cytochrome c oxidoreductase (cytochrome b-c1 complex, complex III, CIII), resulting in different assemblies (supercomplex SCI(1)III(2)IV(1) and megacomplex MCI(2)III(2)IV(2)). Found in a complex with TMEM177, COA6, COX18, COX20, SCO1 and SCO2. Interacts with TMEM177 in a COX20-dependent manner. Interacts with COX20. Interacts with COX16. Cu cation is required as a cofactor.

The protein resides in the mitochondrion inner membrane. The catalysed reaction is 4 Fe(II)-[cytochrome c] + O2 + 8 H(+)(in) = 4 Fe(III)-[cytochrome c] + 2 H2O + 4 H(+)(out). Its function is as follows. Component of the cytochrome c oxidase, the last enzyme in the mitochondrial electron transport chain which drives oxidative phosphorylation. The respiratory chain contains 3 multisubunit complexes succinate dehydrogenase (complex II, CII), ubiquinol-cytochrome c oxidoreductase (cytochrome b-c1 complex, complex III, CIII) and cytochrome c oxidase (complex IV, CIV), that cooperate to transfer electrons derived from NADH and succinate to molecular oxygen, creating an electrochemical gradient over the inner membrane that drives transmembrane transport and the ATP synthase. Cytochrome c oxidase is the component of the respiratory chain that catalyzes the reduction of oxygen to water. Electrons originating from reduced cytochrome c in the intermembrane space (IMS) are transferred via the dinuclear copper A center (CU(A)) of subunit 2 and heme A of subunit 1 to the active site in subunit 1, a binuclear center (BNC) formed by heme A3 and copper B (CU(B)). The BNC reduces molecular oxygen to 2 water molecules using 4 electrons from cytochrome c in the IMS and 4 protons from the mitochondrial matrix. The sequence is that of Cytochrome c oxidase subunit 2 (MT-CO2) from Tupaia glis (Common tree shrew).